The following is a 723-amino-acid chain: Fatty acid oxidation complex subunit alpha (723 aa).

The tract at residues 1 to 189 is enoyl-CoA hydratase/isomerase; it reads MIYQAKTLQV…KVGLLDAIVD (189 aa). Asp-296 is a substrate binding site. Positions 311–723 are 3-hydroxyacyl-CoA dehydrogenase; that stretch reads SQDTQHAAVL…FYSAQQVSAL (413 aa). NAD(+)-binding positions include Met-325, Asp-344, 401–403, Lys-408, and Ser-430; that span reads VVE. His-451 serves as the catalytic For 3-hydroxyacyl-CoA dehydrogenase activity. Asn-454 contacts NAD(+). Substrate is bound by residues Asn-501 and Tyr-661.

In the N-terminal section; belongs to the enoyl-CoA hydratase/isomerase family. This sequence in the C-terminal section; belongs to the 3-hydroxyacyl-CoA dehydrogenase family. In terms of assembly, heterotetramer of two alpha chains (FadB) and two beta chains (FadA).

It carries out the reaction a (3S)-3-hydroxyacyl-CoA + NAD(+) = a 3-oxoacyl-CoA + NADH + H(+). The catalysed reaction is a (3S)-3-hydroxyacyl-CoA = a (2E)-enoyl-CoA + H2O. It catalyses the reaction a 4-saturated-(3S)-3-hydroxyacyl-CoA = a (3E)-enoyl-CoA + H2O. The enzyme catalyses (3S)-3-hydroxybutanoyl-CoA = (3R)-3-hydroxybutanoyl-CoA. It carries out the reaction a (3Z)-enoyl-CoA = a 4-saturated (2E)-enoyl-CoA. The catalysed reaction is a (3E)-enoyl-CoA = a 4-saturated (2E)-enoyl-CoA. It functions in the pathway lipid metabolism; fatty acid beta-oxidation. In terms of biological role, involved in the aerobic and anaerobic degradation of long-chain fatty acids via beta-oxidation cycle. Catalyzes the formation of 3-oxoacyl-CoA from enoyl-CoA via L-3-hydroxyacyl-CoA. It can also use D-3-hydroxyacyl-CoA and cis-3-enoyl-CoA as substrate. This chain is Fatty acid oxidation complex subunit alpha, found in Vibrio cholerae serotype O1 (strain ATCC 39315 / El Tor Inaba N16961).